The sequence spans 453 residues: Chromosomal replication initiator protein DnaA (453 aa).

The domain I, interacts with DnaA modulators stretch occupies residues 1 to 71 (MSEKEIWEKV…QAILFDVVGY (71 aa)). A domain II region spans residues 71–114 (YEVKPHFITTEELANYSNNETATPKETTKPSTETTEDNHVLGRE). Positions 115–331 (QFNAHNTFDT…GALTRLLAYS (217 aa)) are domain III, AAA+ region. ATP contacts are provided by glycine 159, glycine 161, lysine 162, and threonine 163. Positions 332–453 (QLLGKPITTE…ENLEKEIRNV (122 aa)) are domain IV, binds dsDNA.

It belongs to the DnaA family. Oligomerizes as a right-handed, spiral filament on DNA at oriC.

The protein resides in the cytoplasm. In terms of biological role, plays an essential role in the initiation and regulation of chromosomal replication. ATP-DnaA binds to the origin of replication (oriC) to initiate formation of the DNA replication initiation complex once per cell cycle. Binds the DnaA box (a 9 base pair repeat at the origin) and separates the double-stranded (ds)DNA. Forms a right-handed helical filament on oriC DNA; dsDNA binds to the exterior of the filament while single-stranded (ss)DNA is stabiized in the filament's interior. The ATP-DnaA-oriC complex binds and stabilizes one strand of the AT-rich DNA unwinding element (DUE), permitting loading of DNA polymerase. After initiation quickly degrades to an ADP-DnaA complex that is not apt for DNA replication. Binds acidic phospholipids. In Staphylococcus aureus (strain bovine RF122 / ET3-1), this protein is Chromosomal replication initiator protein DnaA.